Reading from the N-terminus, the 709-residue chain is Polyribonucleotide nucleotidyltransferase (709 aa).

Mg(2+) is bound by residues aspartate 487 and aspartate 493. One can recognise a KH domain in the interval 554–613; sequence PRIHTMKISSDKIKDVIGKGGAVIRALCEETGTTIEIEDDGTIKIAATEGAAAKEAIRRI. Positions 623 to 691 constitute an S1 motif domain; sequence GKIYTGKVMR…RQGRIRLSIK (69 aa).

This sequence belongs to the polyribonucleotide nucleotidyltransferase family. In terms of assembly, component of the RNA degradosome, which is a multiprotein complex involved in RNA processing and mRNA degradation. Requires Mg(2+) as cofactor.

The protein resides in the cytoplasm. The enzyme catalyses RNA(n+1) + phosphate = RNA(n) + a ribonucleoside 5'-diphosphate. Involved in mRNA degradation. Catalyzes the phosphorolysis of single-stranded polyribonucleotides processively in the 3'- to 5'-direction. This Aliivibrio fischeri (strain MJ11) (Vibrio fischeri) protein is Polyribonucleotide nucleotidyltransferase.